We begin with the raw amino-acid sequence, 544 residues long: CTP synthase (544 aa).

Residues 1–267 form an amidoligase domain region; sequence MSKFIFVTGG…GDLLVSRLHL (267 aa). Ser-13 contacts CTP. Residue Ser-13 coordinates UTP. 14–19 contributes to the ATP binding site; sequence SVGKGI. Residue Tyr-54 participates in L-glutamine binding. Asp-71 is a binding site for ATP. Residues Asp-71 and Glu-141 each contribute to the Mg(2+) site. Residues 148–150, 188–193, and Lys-224 each bind CTP; these read DIE and KTKPTQ. Residues 188 to 193 and Lys-224 contribute to the UTP site; that span reads KTKPTQ. The Glutamine amidotransferase type-1 domain maps to 299-534; sequence YVELKDAYYS…INAAKKVIRD (236 aa). Gly-354 provides a ligand contact to L-glutamine. The active-site Nucleophile; for glutamine hydrolysis is Cys-381. L-glutamine is bound by residues 382 to 385, Glu-405, and Arg-462; that span reads LGMQ. Residues His-507 and Glu-509 contribute to the active site.

The protein belongs to the CTP synthase family. As to quaternary structure, homotetramer.

It carries out the reaction UTP + L-glutamine + ATP + H2O = CTP + L-glutamate + ADP + phosphate + 2 H(+). The catalysed reaction is L-glutamine + H2O = L-glutamate + NH4(+). The enzyme catalyses UTP + NH4(+) + ATP = CTP + ADP + phosphate + 2 H(+). It participates in pyrimidine metabolism; CTP biosynthesis via de novo pathway; CTP from UDP: step 2/2. With respect to regulation, allosterically activated by GTP, when glutamine is the substrate; GTP has no effect on the reaction when ammonia is the substrate. The allosteric effector GTP functions by stabilizing the protein conformation that binds the tetrahedral intermediate(s) formed during glutamine hydrolysis. Inhibited by the product CTP, via allosteric rather than competitive inhibition. Catalyzes the ATP-dependent amination of UTP to CTP with either L-glutamine or ammonia as the source of nitrogen. Regulates intracellular CTP levels through interactions with the four ribonucleotide triphosphates. This is CTP synthase from Dehalococcoides mccartyi (strain ATCC BAA-2100 / JCM 16839 / KCTC 5957 / BAV1).